The primary structure comprises 104 residues: Large ribosomal subunit protein bL21 (104 aa).

It belongs to the bacterial ribosomal protein bL21 family. In terms of assembly, part of the 50S ribosomal subunit. Contacts protein L20.

In terms of biological role, this protein binds to 23S rRNA in the presence of protein L20. The polypeptide is Large ribosomal subunit protein bL21 (Caldanaerobacter subterraneus subsp. tengcongensis (strain DSM 15242 / JCM 11007 / NBRC 100824 / MB4) (Thermoanaerobacter tengcongensis)).